Here is a 1053-residue protein sequence, read N- to C-terminus: Integrin alpha-3 (1053 aa).

Residues Met-1–Ala-32 form the signal peptide. Topologically, residues Phe-33–Glu-993 are extracellular. 7 FG-GAP repeats span residues Arg-38–Cys-103, Glu-110–Leu-171, Cys-185–Ser-235, Glu-236–Leu-293, Gln-294–Pro-355, Gln-357–Arg-412, and Gln-416–Pro-478. Asn-86 carries N-linked (GlcNAc...) asparagine glycosylation. Cystine bridges form between Cys-94-Cys-103, Cys-140-Cys-162, and Cys-185-Cys-197. Cystine bridges form between Cys-486–Cys-491 and Cys-497–Cys-551. Asn-501, Asn-512, Asn-574, and Asn-606 each carry an N-linked (GlcNAc...) asparagine glycan. A disulfide bridge connects residues Cys-616 and Cys-622. Residues Asn-657, Asn-699, Asn-843, and Asn-859 are each glycosylated (N-linked (GlcNAc...) asparagine). Cys-695 and Cys-704 are oxidised to a cystine. 2 disulfide bridges follow: Cys-848/Cys-906 and Cys-913/Cys-918. The tract at residues Pro-865–Val-890 is disordered. N-linked (GlcNAc...) asparagine glycosylation is found at Asn-925, Asn-928, Asn-937, and Asn-971. The helical transmembrane segment at Leu-994 to Phe-1021 threads the bilayer. Cys-1018 carries the S-palmitoyl cysteine lipid modification. Topologically, residues Lys-1022 to Tyr-1053 are cytoplasmic.

This sequence belongs to the integrin alpha chain family. As to quaternary structure, heterodimer of an alpha and a beta subunit. The alpha subunit is composed of a heavy and a light chain linked by a disulfide bond. Alpha-3 associates with beta-1. Interacts with HPS5. Interacts with FAP (seprase); the interaction occurs at the cell surface of invadopodia membrane in a collagen-dependent manner. Isoform 1 and isoform 2 are expressed in heart and brain. Only isoform 1 is detected in lung.

It localises to the cell membrane. The protein localises to the cell projection. It is found in the invadopodium membrane. Its subcellular location is the filopodium membrane. Functionally, integrin alpha-3/beta-1 is a receptor for fibronectin, laminin, collagen, epiligrin, thrombospondin and CSPG4. Integrin alpha-3/beta-1 provides a docking site for FAP (seprase) at invadopodia plasma membranes in a collagen-dependent manner and hence may participate in the adhesion, formation of invadopodia and matrix degradation processes, promoting cell invasion. Alpha-3/beta-1 may mediate with LGALS3 the stimulation by CSPG4 of endothelial cells migration. In Mus musculus (Mouse), this protein is Integrin alpha-3 (Itga3).